Consider the following 169-residue polypeptide: Gametocyte-specific factor 1-like (169 aa).

CHHC U11-48K-type zinc fingers lie at residues 6–33 (LETC…RRKN) and 40–67 (MASC…VNKS). Zn(2+)-binding residues include Cys-9, His-15, His-25, Cys-29, Cys-43, His-49, His-59, and Cys-63. Disordered stretches follow at residues 67–103 (STME…LPNP) and 131–169 (SDTR…LLKA). The span at 131-158 (SDTRESETDDHNPIPDCPRRRSSDRESE) shows a compositional bias: basic and acidic residues.

This sequence belongs to the UPF0224 (FAM112) family.

This Bos taurus (Bovine) protein is Gametocyte-specific factor 1-like (GTSF1L).